A 159-amino-acid chain; its full sequence is Nutritionally-regulated adipose and cardiac-enriched protein homolog (159 aa).

Positions 1–67 are disordered; that stretch reads MKTAVHALSP…GDEPRRTTRH (67 aa). Composition is skewed to basic and acidic residues over residues 12–25 and 50–63; these read SRPE…KNEE and SPQE…EPRR. The helical transmembrane segment at 107–124 threads the bilayer; the sequence is LTACILLALALGMCCGQA.

The protein localises to the cell membrane. The protein is Nutritionally-regulated adipose and cardiac-enriched protein homolog (NRAC) of Bos taurus (Bovine).